The chain runs to 264 residues: MARRYDSRTTIFSPEGRLYQVEYAMEAISHAGTCLGILAEDGILLAAECRSTNKLLDSAIPSEKIYRLNDNMVCSVAGITSDANVLTSELRLIAQRYQFSYGEVIPCEQLVSHLCDIKQAYTQYGGKRPFGVSLLYMGWDNKYGYQLYQSDPSGNYGGWKATCIGNNFGAAISMLKQELADKENVKLTLADAKDLAIKVLSMTLDTTKLTPEKVEMATLQRVDNKTVYSVLEKPDVEKLIEKYTKVQAEAEAAKKEKQAKQPTK.

The protein belongs to the peptidase T1A family. In terms of assembly, the 26S proteasome consists of a 20S proteasome core and two 19S regulatory subunits. The 20S proteasome core is composed of 28 subunits that are arranged in four stacked rings, resulting in a barrel-shaped structure. The two end rings are each formed by seven alpha subunits, and the two central rings are each formed by seven beta subunits. The catalytic chamber with the active sites is on the inside of the barrel. Interacts with PI31.

It localises to the cytoplasm. The protein resides in the nucleus. In terms of biological role, the proteasome is a multicatalytic proteinase complex which is characterized by its ability to cleave peptides with Arg, Phe, Tyr, Leu, and Glu adjacent to the leaving group at neutral or slightly basic pH. The proteasome has an ATP-dependent proteolytic activity. In Drosophila melanogaster (Fruit fly), this protein is Proteasome subunit alpha type-4 (Prosalpha3).